Here is an 82-residue protein sequence, read N- to C-terminus: Large ribosomal subunit protein bL27 (82 aa).

The segment at Met1–Gly26 is disordered.

The protein belongs to the bacterial ribosomal protein bL27 family.

In Chlamydia felis (strain Fe/C-56) (Chlamydophila felis), this protein is Large ribosomal subunit protein bL27.